The sequence spans 413 residues: Putative competence-damage inducible protein (413 aa).

Belongs to the CinA family.

This Acetivibrio thermocellus (strain ATCC 27405 / DSM 1237 / JCM 9322 / NBRC 103400 / NCIMB 10682 / NRRL B-4536 / VPI 7372) (Clostridium thermocellum) protein is Putative competence-damage inducible protein.